Consider the following 78-residue polypeptide: Small ribosomal subunit protein bS18 (78 aa).

This sequence belongs to the bacterial ribosomal protein bS18 family. In terms of assembly, part of the 30S ribosomal subunit. Forms a tight heterodimer with protein bS6.

Functionally, binds as a heterodimer with protein bS6 to the central domain of the 16S rRNA, where it helps stabilize the platform of the 30S subunit. In Acidothermus cellulolyticus (strain ATCC 43068 / DSM 8971 / 11B), this protein is Small ribosomal subunit protein bS18.